We begin with the raw amino-acid sequence, 1061 residues long: Transcription factor GTE10 (1061 aa).

2 disordered regions span residues 32 to 56 (ERMN…NNGV) and 106 to 152 (NDHS…RLNV). Positions 109 to 118 (SCSDGPRRPP) are enriched in basic and acidic residues. Positions 156–262 (YTVASVMKEC…KYFESGWKSI (107 aa)) constitute a Bromo domain. Residues 304–386 (KLRVEPAKLV…DYLREKKKSM (83 aa)) form the NET domain. 4 disordered regions span residues 443–518 (ACRN…LNEL), 538–558 (VPDE…PDKR), 606–645 (KERL…ARQA), and 710–1033 (HLGL…GNGK). Low complexity predominate over residues 448 to 476 (ESSSSSSSSSESGSSSSDSDSCSSSGSET). Residues 477 to 506 (DSIKASKPTSREEKKQPGVGIDKKEDDSNS) show a composition bias toward basic and acidic residues. The stretch at 588 to 658 (PEKLRIEREE…MEKTVEINEG (71 aa)) forms a coiled coil. Composition is skewed to basic and acidic residues over residues 733 to 755 (RKVE…RVEG), 770 to 792 (EAHD…ERQL), 828 to 852 (EEVH…EDPR), 860 to 883 (VSEK…REEQ), and 912 to 929 (LSLD…REEG). The stretch at 852–893 (RASGNEESVSEKAQDYENQRDEKINQSEREEQLENVLEQESS) forms a coiled coil. Polar residues predominate over residues 940–949 (LVSQKTQDNG). Composition is skewed to basic and acidic residues over residues 952 to 962 (EDEKSINKIEG) and 990 to 1002 (GEQK…KGVE).

In terms of assembly, interacts with TIP/NAC091. As to expression, widely expressed in all tissues.

Its subcellular location is the nucleus. In terms of biological role, acts as a negative regulator in plant response to changes in environmental conditions through the control of ABA-regulated gene expression. The sequence is that of Transcription factor GTE10 (GTE10) from Arabidopsis thaliana (Mouse-ear cress).